The following is a 339-amino-acid chain: Adenosine deaminase (339 aa).

Positions 15 and 17 each coordinate Zn(2+). Residues H17, D19, and G172 each contribute to the substrate site. Residue H199 participates in Zn(2+) binding. E202 serves as the catalytic Proton donor. Zn(2+) is bound at residue D279.

It belongs to the metallo-dependent hydrolases superfamily. Adenosine and AMP deaminases family. Adenosine deaminase subfamily. Zn(2+) is required as a cofactor.

It catalyses the reaction adenosine + H2O + H(+) = inosine + NH4(+). The catalysed reaction is 2'-deoxyadenosine + H2O + H(+) = 2'-deoxyinosine + NH4(+). Its function is as follows. Catalyzes the hydrolytic deamination of adenosine and 2-deoxyadenosine. The chain is Adenosine deaminase from Lacticaseibacillus casei (strain BL23) (Lactobacillus casei).